Reading from the N-terminus, the 293-residue chain is Phosphoribosylaminoimidazole-succinocarboxamide synthase (293 aa).

Belongs to the SAICAR synthetase family.

It catalyses the reaction 5-amino-1-(5-phospho-D-ribosyl)imidazole-4-carboxylate + L-aspartate + ATP = (2S)-2-[5-amino-1-(5-phospho-beta-D-ribosyl)imidazole-4-carboxamido]succinate + ADP + phosphate + 2 H(+). The protein operates within purine metabolism; IMP biosynthesis via de novo pathway; 5-amino-1-(5-phospho-D-ribosyl)imidazole-4-carboxamide from 5-amino-1-(5-phospho-D-ribosyl)imidazole-4-carboxylate: step 1/2. This is Phosphoribosylaminoimidazole-succinocarboxamide synthase from Bordetella parapertussis (strain 12822 / ATCC BAA-587 / NCTC 13253).